A 365-amino-acid chain; its full sequence is uncharacterized protein (365 aa).

3 helical membrane passes run 105–125 (TGNW…QCWL), 151–171 (ILTT…SLTI), and 187–207 (IFLI…SLIF).

It is found in the cell membrane. This is an uncharacterized protein from Mycoplasma genitalium (strain ATCC 33530 / DSM 19775 / NCTC 10195 / G37) (Mycoplasmoides genitalium).